The chain runs to 123 residues: Large ribosomal subunit protein bL12 (123 aa).

Belongs to the bacterial ribosomal protein bL12 family. As to quaternary structure, homodimer. Part of the ribosomal stalk of the 50S ribosomal subunit. Forms a multimeric L10(L12)X complex, where L10 forms an elongated spine to which 2 to 4 L12 dimers bind in a sequential fashion. Binds GTP-bound translation factors.

Its function is as follows. Forms part of the ribosomal stalk which helps the ribosome interact with GTP-bound translation factors. Is thus essential for accurate translation. This chain is Large ribosomal subunit protein bL12, found in Acinetobacter baumannii (strain AB307-0294).